A 449-amino-acid polypeptide reads, in one-letter code: tRNA (guanine(37)-N(1))-methyltransferase (449 aa).

Residues H216, 254-255, 282-283, and N345 each bind S-adenosyl-L-methionine; these read DL and DG.

It belongs to the class I-like SAM-binding methyltransferase superfamily. TRM5/TYW2 family. Monomer.

The protein localises to the mitochondrion matrix. The protein resides in the nucleus. Its subcellular location is the cytoplasm. The enzyme catalyses guanosine(37) in tRNA + S-adenosyl-L-methionine = N(1)-methylguanosine(37) in tRNA + S-adenosyl-L-homocysteine + H(+). Specifically methylates the N1 position of guanosine-37 in various cytoplasmic and mitochondrial tRNAs. Methylation is not dependent on the nature of the nucleoside 5' of the target nucleoside. This is the first step in the biosynthesis of wybutosine (yW), a modified base adjacent to the anticodon of tRNAs and required for accurate decoding. The sequence is that of tRNA (guanine(37)-N(1))-methyltransferase from Candida albicans (strain WO-1) (Yeast).